Here is a 202-residue protein sequence, read N- to C-terminus: MDFVNNDTRQIAKNLLGVKVIYQDTTQTYTGYIVETEAYLGLNDRAAHGYGGKITPKVTSLYKRGGTIYAHVMHTHLLINFVTKSEGIPEGVLIRAIEPEEGLSAMFRNRGKKGYEVTNGPGKWTKAFNIPRAIDGATLNDCRLSIDTKNRKYPKDIIASPRIGIPNKGDWTHKSLRYTVKGNPFVSRMRKSDCMFPEDTWK.

The protein belongs to the DNA glycosylase MPG family.

This Staphylococcus aureus (strain Mu3 / ATCC 700698) protein is Putative 3-methyladenine DNA glycosylase.